We begin with the raw amino-acid sequence, 647 residues long: 1-deoxy-D-xylulose-5-phosphate synthase (647 aa).

Thiamine diphosphate-binding positions include His-88 and 129-131 (GHA). A Mg(2+)-binding site is contributed by Asp-160. Residues 161 to 162 (GA), Asn-189, Tyr-300, and Glu-377 each bind thiamine diphosphate. Asn-189 lines the Mg(2+) pocket.

The protein belongs to the transketolase family. DXPS subfamily. In terms of assembly, homodimer. Requires Mg(2+) as cofactor. It depends on thiamine diphosphate as a cofactor.

It catalyses the reaction D-glyceraldehyde 3-phosphate + pyruvate + H(+) = 1-deoxy-D-xylulose 5-phosphate + CO2. It participates in metabolic intermediate biosynthesis; 1-deoxy-D-xylulose 5-phosphate biosynthesis; 1-deoxy-D-xylulose 5-phosphate from D-glyceraldehyde 3-phosphate and pyruvate: step 1/1. Catalyzes the acyloin condensation reaction between C atoms 2 and 3 of pyruvate and glyceraldehyde 3-phosphate to yield 1-deoxy-D-xylulose-5-phosphate (DXP). The sequence is that of 1-deoxy-D-xylulose-5-phosphate synthase from Dehalococcoides mccartyi (strain ATCC BAA-2266 / KCTC 15142 / 195) (Dehalococcoides ethenogenes (strain 195)).